A 599-amino-acid polypeptide reads, in one-letter code: Elongation factor 4 (599 aa).

A tr-type G domain is found at 2-184 (KNIRNFSIIA…RLVRDIPPPE (183 aa)). Residues 14–19 (DHGKST) and 131–134 (NKID) each bind GTP.

The protein belongs to the TRAFAC class translation factor GTPase superfamily. Classic translation factor GTPase family. LepA subfamily.

It localises to the cell inner membrane. The enzyme catalyses GTP + H2O = GDP + phosphate + H(+). In terms of biological role, required for accurate and efficient protein synthesis under certain stress conditions. May act as a fidelity factor of the translation reaction, by catalyzing a one-codon backward translocation of tRNAs on improperly translocated ribosomes. Back-translocation proceeds from a post-translocation (POST) complex to a pre-translocation (PRE) complex, thus giving elongation factor G a second chance to translocate the tRNAs correctly. Binds to ribosomes in a GTP-dependent manner. The protein is Elongation factor 4 of Shigella sonnei (strain Ss046).